A 668-amino-acid chain; its full sequence is Spindle assembly abnormal protein 6 homolog (668 aa).

The PISA domain maps to V39–L91. The stretch at L182–L482 forms a coiled coil. Positions G623–S668 are disordered.

Nine homodimers form a cartwheel structure with an internal diameter of 23 nM and radial spokes connecting to the microtubule triplets.

It localises to the cytoplasm. Its subcellular location is the cytoskeleton. The protein resides in the microtubule organizing center. The protein localises to the centrosome. Functionally, central scaffolding component of the centrioles ensuring their 9-fold symmetry. Required for centrosome biogenesis and duplication: required both for mother-centriole-dependent centriole duplication and deuterosome-dependent centriole amplification in multiciliated cells. This chain is Spindle assembly abnormal protein 6 homolog (sas6), found in Xenopus laevis (African clawed frog).